The chain runs to 315 residues: Type II methyltransferase M.Bsp6I (315 aa).

Residues 2–315 (LQIASLFAGV…IAENIYKSML (314 aa)) enclose the SAM-dependent MTase C5-type domain. Cysteine 73 is an active-site residue.

Belongs to the class I-like SAM-binding methyltransferase superfamily. C5-methyltransferase family.

The catalysed reaction is a 2'-deoxycytidine in DNA + S-adenosyl-L-methionine = a 5-methyl-2'-deoxycytidine in DNA + S-adenosyl-L-homocysteine + H(+). Functionally, a methylase that recognizes the double-stranded sequence 5'-GCNGC-3', methylates C-? on both strands, and protects the DNA from cleavage by the Bsp6I endonuclease. The polypeptide is Type II methyltransferase M.Bsp6I (Bacillus sp. (strain RFL6)).